A 1401-amino-acid chain; its full sequence is Alpha-latrotoxin-Lt1a (1401 aa).

A signal peptide spans methionine 1 to arginine 20. The interval arginine 17–arginine 20 is furin-like endopeptidase recognition region. Positions valine 238 to leucine 257 are helix H8 is the probable transmembrane region of the tetrameric pore inserted in the target cell membrane. The cysteines at positions 413 and 1066 are disulfide-linked. ANK repeat units follow at residues leucine 458 to aspartate 489, histidine 490 to glutamine 521, lysine 525 to serine 554, phenylalanine 559 to glutamate 589, aspartate 593 to alanine 622, threonine 626 to alanine 656, asparagine 660 to valine 690, glycine 695 to valine 723, glycine 729 to glutamine 758, glutamate 762 to alanine 791, serine 795 to aspartate 824, asparagine 828 to aspartate 857, asparagine 862 to threonine 891, lysine 895 to isoleucine 924, aspartate 928 to tryptophan 957, glutamate 971 to alanine 1003, isoleucine 1004 to glycine 1033, lysine 1035 to histidine 1064, asparagine 1068 to arginine 1097, arginine 1101 to isoleucine 1131, aspartate 1137 to isoleucine 1166, and tyrosine 1170 to arginine 1199. The segment at glutamate 1026–aspartate 1032 is 4C4.1 epitope. A furin-like endopeptidase recognition region region spans residues lysine 1196–arginine 1199. A propeptide spanning residues glutamate 1200–methionine 1401 is cleaved from the precursor.

It belongs to the cationic peptide 01 (latrotoxin) family. 03 (alpha-latrotoxin) subfamily. Homotetramer in membranes. In terms of processing, processed by furin-like proteases at both the N- and C-termini. In terms of tissue distribution, expressed in venom gland, cephalothorax, and abdomen tissues from both males and females.

The protein localises to the secreted. It is found in the target cell membrane. Functionally, presynaptic neurotoxin that causes massive release of neurotransmitters from vertebrate (but not invertebrate) nerve terminals and endocrine cells via a complex mechanism involving activation of receptor(s) and toxin insertion into the plasma membrane with subsequent pore formation. Binds to neurexin-1-alpha (NRXN1) in a calcium dependent manner, adhesion G protein-coupled receptor L1 (ADGRL1, also termed latrophilin-1 and calcium-independent receptor of latrotoxin (CIRL)), and receptor-type tyrosine-protein phosphatase S (PTPRS), also termed PTP sigma. NRXN1 and PTPRS are suggested to provide a platform for binding and subsequent pore formation events. In contrast, binding to ADGRL1 does not involve oligomerization and channel formation, but direct downstream stimulation of the synaptic fusion machinery. The protein is Alpha-latrotoxin-Lt1a of Latrodectus tredecimguttatus (Mediterranean black widow spider).